Here is a 1102-residue protein sequence, read N- to C-terminus: Carbamoyl phosphate synthase large chain (1102 aa).

The segment at 1 to 408 (MPKRTDIQSV…ALQKALRSLE (408 aa)) is carboxyphosphate synthetic domain. ATP is bound by residues Arg-129, Arg-175, Gly-181, Gly-182, Glu-214, Ile-216, Glu-221, Gly-247, Val-248, His-249, Gln-291, and Glu-305. The ATP-grasp 1 domain occupies 138-334 (AVRAKIGHGE…IAKIAAKLAV (197 aa)). Mg(2+) contacts are provided by Gln-291, Glu-305, and Asn-307. Gln-291, Glu-305, and Asn-307 together coordinate Mn(2+). The oligomerization domain stretch occupies residues 409 to 551 (KKGSQFTFVG…YFYSSYDEES (143 aa)). Residues 552–954 (EVAPREKPAV…AYAKSQAGAY (403 aa)) form a carbamoyl phosphate synthetic domain region. Residues 682–873 (GQVLAEAGLP…LAKAAARISL (192 aa)) form the ATP-grasp 2 domain. Positions 718, 757, 759, 764, 789, 790, 791, 792, 832, and 844 each coordinate ATP. Mg(2+) is bound by residues Gln-832, Glu-844, and Asn-846. Mn(2+) is bound by residues Gln-832, Glu-844, and Asn-846. The MGS-like domain occupies 955-1100 (GPLPTKGRAF…QEHAEHLTAA (146 aa)). Positions 955-1102 (GPLPTKGRAF…HAEHLTAARD (148 aa)) are allosteric domain.

The protein belongs to the CarB family. As to quaternary structure, composed of two chains; the small (or glutamine) chain promotes the hydrolysis of glutamine to ammonia, which is used by the large (or ammonia) chain to synthesize carbamoyl phosphate. Tetramer of heterodimers (alpha,beta)4. The cofactor is Mg(2+). Requires Mn(2+) as cofactor.

It carries out the reaction hydrogencarbonate + L-glutamine + 2 ATP + H2O = carbamoyl phosphate + L-glutamate + 2 ADP + phosphate + 2 H(+). It catalyses the reaction hydrogencarbonate + NH4(+) + 2 ATP = carbamoyl phosphate + 2 ADP + phosphate + 2 H(+). The protein operates within amino-acid biosynthesis; L-arginine biosynthesis; carbamoyl phosphate from bicarbonate: step 1/1. It participates in pyrimidine metabolism; UMP biosynthesis via de novo pathway; (S)-dihydroorotate from bicarbonate: step 1/3. In terms of biological role, large subunit of the glutamine-dependent carbamoyl phosphate synthetase (CPSase). CPSase catalyzes the formation of carbamoyl phosphate from the ammonia moiety of glutamine, carbonate, and phosphate donated by ATP, constituting the first step of 2 biosynthetic pathways, one leading to arginine and/or urea and the other to pyrimidine nucleotides. The large subunit (synthetase) binds the substrates ammonia (free or transferred from glutamine from the small subunit), hydrogencarbonate and ATP and carries out an ATP-coupled ligase reaction, activating hydrogencarbonate by forming carboxy phosphate which reacts with ammonia to form carbamoyl phosphate. This Streptomyces avermitilis (strain ATCC 31267 / DSM 46492 / JCM 5070 / NBRC 14893 / NCIMB 12804 / NRRL 8165 / MA-4680) protein is Carbamoyl phosphate synthase large chain.